Here is a 98-residue protein sequence, read N- to C-terminus: NADH-ubiquinone oxidoreductase chain 4L (98 aa).

A run of 2 helical transmembrane segments spans residues 29–49 and 61–81; these read SLLC…LLIL and ILLL…LVTV.

Belongs to the complex I subunit 4L family. Core subunit of respiratory chain NADH dehydrogenase (Complex I) which is composed of 45 different subunits.

Its subcellular location is the mitochondrion inner membrane. The catalysed reaction is a ubiquinone + NADH + 5 H(+)(in) = a ubiquinol + NAD(+) + 4 H(+)(out). Core subunit of the mitochondrial membrane respiratory chain NADH dehydrogenase (Complex I) which catalyzes electron transfer from NADH through the respiratory chain, using ubiquinone as an electron acceptor. Part of the enzyme membrane arm which is embedded in the lipid bilayer and involved in proton translocation. This Cheirogaleus medius (Fat-tailed dwarf lemur) protein is NADH-ubiquinone oxidoreductase chain 4L (MT-ND4L).